The following is a 137-amino-acid chain: Nucleoside diphosphate kinase (137 aa).

6 residues coordinate ATP: Lys9, Phe57, Arg85, Thr91, Arg102, and Asn112. His115 serves as the catalytic Pros-phosphohistidine intermediate.

It belongs to the NDK family. As to quaternary structure, homotetramer. Requires Mg(2+) as cofactor.

The protein resides in the cytoplasm. The enzyme catalyses a 2'-deoxyribonucleoside 5'-diphosphate + ATP = a 2'-deoxyribonucleoside 5'-triphosphate + ADP. It carries out the reaction a ribonucleoside 5'-diphosphate + ATP = a ribonucleoside 5'-triphosphate + ADP. Functionally, major role in the synthesis of nucleoside triphosphates other than ATP. The ATP gamma phosphate is transferred to the NDP beta phosphate via a ping-pong mechanism, using a phosphorylated active-site intermediate. In Campylobacter curvus (strain 525.92), this protein is Nucleoside diphosphate kinase.